A 301-amino-acid polypeptide reads, in one-letter code: Methionyl-tRNA formyltransferase (301 aa).

Position 110–113 (110–113 (SLLP)) interacts with (6S)-5,6,7,8-tetrahydrofolate.

It belongs to the Fmt family.

It catalyses the reaction L-methionyl-tRNA(fMet) + (6R)-10-formyltetrahydrofolate = N-formyl-L-methionyl-tRNA(fMet) + (6S)-5,6,7,8-tetrahydrofolate + H(+). Functionally, attaches a formyl group to the free amino group of methionyl-tRNA(fMet). The formyl group appears to play a dual role in the initiator identity of N-formylmethionyl-tRNA by promoting its recognition by IF2 and preventing the misappropriation of this tRNA by the elongation apparatus. The protein is Methionyl-tRNA formyltransferase of Anaplasma phagocytophilum (strain HZ).